The following is a 420-amino-acid chain: Histidine--tRNA ligase (420 aa).

This sequence belongs to the class-II aminoacyl-tRNA synthetase family. In terms of assembly, homodimer.

Its subcellular location is the cytoplasm. The catalysed reaction is tRNA(His) + L-histidine + ATP = L-histidyl-tRNA(His) + AMP + diphosphate + H(+). This chain is Histidine--tRNA ligase (hisS), found in Thermotoga maritima (strain ATCC 43589 / DSM 3109 / JCM 10099 / NBRC 100826 / MSB8).